We begin with the raw amino-acid sequence, 76 residues long: Small ribosomal subunit protein bS18 (76 aa).

Belongs to the bacterial ribosomal protein bS18 family. In terms of assembly, part of the 30S ribosomal subunit. Forms a tight heterodimer with protein bS6.

In terms of biological role, binds as a heterodimer with protein bS6 to the central domain of the 16S rRNA, where it helps stabilize the platform of the 30S subunit. The sequence is that of Small ribosomal subunit protein bS18 from Xylella fastidiosa (strain 9a5c).